The primary structure comprises 304 residues: Acetylglutamate kinase (304 aa).

Substrate-binding positions include glycine 77 to glycine 78, arginine 99, and asparagine 193.

It belongs to the acetylglutamate kinase family. ArgB subfamily.

It localises to the cytoplasm. It carries out the reaction N-acetyl-L-glutamate + ATP = N-acetyl-L-glutamyl 5-phosphate + ADP. The protein operates within amino-acid biosynthesis; L-arginine biosynthesis; N(2)-acetyl-L-ornithine from L-glutamate: step 2/4. Catalyzes the ATP-dependent phosphorylation of N-acetyl-L-glutamate. This is Acetylglutamate kinase from Chlorobium limicola (strain DSM 245 / NBRC 103803 / 6330).